The following is a 126-amino-acid chain: Probable prefoldin subunit 4 (126 aa).

It belongs to the prefoldin subunit beta family. As to quaternary structure, heterohexamer of two PFD-alpha type and four PFD-beta type subunits.

In terms of biological role, binds specifically to cytosolic chaperonin (c-CPN) and transfers target proteins to it. Binds to nascent polypeptide chain and promotes folding in an environment in which there are many competing pathways for nonnative proteins. This is Probable prefoldin subunit 4 (pfd-4) from Caenorhabditis elegans.